The primary structure comprises 386 residues: L-lactate dehydrogenase (386 aa).

An FMN hydroxy acid dehydrogenase domain is found at M1–R380. Y24 serves as a coordination point for substrate. FMN is bound by residues S106 and Q127. A substrate-binding site is contributed by Y129. T155 is a binding site for FMN. Residue R164 participates in substrate binding. K251 is an FMN binding site. Residue H275 is the Proton acceptor of the active site. R278 lines the substrate pocket. D306–R330 serves as a coordination point for FMN.

This sequence belongs to the FMN-dependent alpha-hydroxy acid dehydrogenase family. The cofactor is FMN.

It is found in the cell inner membrane. It carries out the reaction (S)-lactate + A = pyruvate + AH2. Catalyzes the conversion of L-lactate to pyruvate. Is coupled to the respiratory chain. In Xanthomonas campestris pv. campestris (strain 8004), this protein is L-lactate dehydrogenase.